A 119-amino-acid polypeptide reads, in one-letter code: Large ribosomal subunit protein uL18 (119 aa).

Positions 1 to 24 (MITKQDKNQVRKKRHARVRSKISG) are disordered. Residues 10 to 20 (VRKKRHARVRS) are compositionally biased toward basic residues.

Belongs to the universal ribosomal protein uL18 family. In terms of assembly, part of the 50S ribosomal subunit; part of the 5S rRNA/L5/L18/L25 subcomplex. Contacts the 5S and 23S rRNAs.

Functionally, this is one of the proteins that bind and probably mediate the attachment of the 5S RNA into the large ribosomal subunit, where it forms part of the central protuberance. The chain is Large ribosomal subunit protein uL18 from Lysinibacillus sphaericus (strain C3-41).